Here is a 588-residue protein sequence, read N- to C-terminus: Vesicular glutamate transporter 3 (588 aa).

The Cytoplasmic portion of the chain corresponds to 1–76 (MPFNAFDTFK…CSCCGIPKRY (76 aa)). A helical membrane pass occupies residues 77 to 97 (IIAVMSGLGFCISFGIRCNLG). Topologically, residues 98-130 (VAIVEMVNNSTVYVDGKPEIQTAQFNWDPETVG) are vesicular. A glycan (N-linked (GlcNAc...) asparagine) is linked at Asn106. A helical membrane pass occupies residues 131–151 (LIHGSFFWGYIVTQIPGGFIS). Over 152 to 153 (NK) the chain is Cytoplasmic. Residues 154 to 174 (FAANRVFGAAIFLTSTLNMFI) form a helical membrane-spanning segment. Over 175 to 182 (PSAARVHY) the chain is Vesicular. The helical transmembrane segment at 183 to 203 (GCVMCVRILQGLVEGVTYPAC) threads the bilayer. The Cytoplasmic segment spans residues 204 to 221 (HGMWSKWAPPLERSRLAT). The chain crosses the membrane as a helical span at residues 222–242 (TSFCGSYAGAVVAMPLAGVLV). Topologically, residues 243–249 (QYIGWAS) are vesicular. The helical transmembrane segment at 250–270 (VFYIYGMFGIIWYMFWLLQAY) threads the bilayer. The Cytoplasmic segment spans residues 271 to 314 (ECPAVHPTISNEERTYIETSIGEGANLASLSKFNTPWRRFFTSL). The helical transmembrane segment at 315–335 (PVYAIIVANFCRSWTFYLLLI) threads the bilayer. Residues 336–353 (SQPAYFEEVFGFAISKVG) lie on the Vesicular side of the membrane. Residues 354–374 (LLSAVPHMVMTIVVPIGGQLA) traverse the membrane as a helical segment. The Cytoplasmic portion of the chain corresponds to 375–390 (DYLRSRKILTTTAVRK). Residues 391 to 411 (IMNCGGFGMEATLLLVVGFSH) form a helical membrane-spanning segment. Residues 412-413 (TK) lie on the Vesicular side of the membrane. Residues 414 to 434 (GVAISFLVLAVGFSGFAISGF) form a helical membrane-spanning segment. Over 435–447 (NVNHLDIAPRYAS) the chain is Cytoplasmic. Residues 448 to 468 (ILMGISNGVGTLSGMVCPLIV) form a helical membrane-spanning segment. Residues 469 to 481 (GAMTKHKTREEWQ) lie on the Vesicular side of the membrane. The helical transmembrane segment at 482–502 (NVFLIAALVHYSGVIFYGVFA) threads the bilayer. The Cytoplasmic portion of the chain corresponds to 503-585 (SGEKQDWADP…LSYQNEEDFS (83 aa)). The segment at 539–588 (FVSPRKKMSYGATTQNCEVQKTDRRQQRESAFEGEEPLSYQNEEDFSETS) is disordered. The segment covering 558–569 (QKTDRRQQRESA) has biased composition (basic and acidic residues). A compositionally biased stretch (acidic residues) spans 570–588 (FEGEEPLSYQNEEDFSETS).

Belongs to the major facilitator superfamily. Sodium/anion cotransporter family. VGLUT subfamily. As to expression, expressed in brain, kidney and liver. Expressed within the amygdala, brainstem, cerberal cortex, dorsal root ganglia, dorsal spinal cord, hippocampus, hypothalamus, retina, striatum and ventral spinal cord. Expressed within neurons of the caudate-putamen, olfactory tubercle, nucleus accumbens, hippocampus, interpeduncular nucleus and dorsal and medial raphe nuclei. Expressed in inner hair cells of the ear. Expressed at synaptic terminals within the lateral superior olive (LSO), a nucleus of the mammalian sound localization system, and in the medial nucleus of the trapezoid body (MNTB), which provides inhibitory input to the LSO.

The protein resides in the cytoplasmic vesicle. Its subcellular location is the secretory vesicle. It localises to the synaptic vesicle membrane. It is found in the cell membrane. The protein localises to the synapse. The protein resides in the synaptosome. It carries out the reaction L-glutamate(out) = L-glutamate(in). It catalyses the reaction chloride(in) = chloride(out). The enzyme catalyses 3 Na(+)(out) + phosphate(out) = 3 Na(+)(in) + phosphate(in). The L-glutamate uniporter activity exhibits a biphasic dependence on chloride concentration. Chloride channel activity is allosterically activated by lumenal H(+) and Cl(-) leading to synaptic vesicles acidification. The glutamate transport activity is allosterically activated by lumenal H(+) and Cl(-), preventing non-vesicular L-glutamate release. Multifunctional transporter that transports L-glutamate as well as multiple ions such as chloride, sodium and phosphate. At the synaptic vesicle membrane, mainly functions as an uniporter that mediates the uptake of L-glutamate into synaptic vesicles at presynaptic nerve terminals of excitatory neural cells. The L-glutamate uniporter activity is electrogenic and is driven by the proton electrochemical gradient, mainly by the electrical gradient established by the vacuolar H(+)-ATPase across the synaptic vesicle membrane. In addition, functions as a chloride channel that allows a chloride permeation through the synaptic vesicle membrane that affects the proton electrochemical gradient and promotes synaptic vesicles acidification. At the plasma membrane, following exocytosis, functions as a symporter of Na(+) and phosphate from the extracellular space to the cytoplasm allowing synaptic phosphate homeostasis regulation. The symporter activity is electrogenic. Moreover, operates synergistically with SLC18A3/VACHT under a constant H(+) gradient, thereby allowing striatal vesicular acetylcholine uptake. The chain is Vesicular glutamate transporter 3 from Rattus norvegicus (Rat).